A 296-amino-acid polypeptide reads, in one-letter code: Phosphoribosylaminoimidazole-succinocarboxamide synthase (296 aa).

Belongs to the SAICAR synthetase family.

It catalyses the reaction 5-amino-1-(5-phospho-D-ribosyl)imidazole-4-carboxylate + L-aspartate + ATP = (2S)-2-[5-amino-1-(5-phospho-beta-D-ribosyl)imidazole-4-carboxamido]succinate + ADP + phosphate + 2 H(+). Its pathway is purine metabolism; IMP biosynthesis via de novo pathway; 5-amino-1-(5-phospho-D-ribosyl)imidazole-4-carboxamide from 5-amino-1-(5-phospho-D-ribosyl)imidazole-4-carboxylate: step 1/2. This is Phosphoribosylaminoimidazole-succinocarboxamide synthase from Geobacter sp. (strain M21).